The sequence spans 92 residues: Pyrimidine/purine nucleoside phosphorylase (92 aa).

This sequence belongs to the nucleoside phosphorylase PpnP family.

It carries out the reaction a purine D-ribonucleoside + phosphate = a purine nucleobase + alpha-D-ribose 1-phosphate. The enzyme catalyses adenosine + phosphate = alpha-D-ribose 1-phosphate + adenine. It catalyses the reaction cytidine + phosphate = cytosine + alpha-D-ribose 1-phosphate. The catalysed reaction is guanosine + phosphate = alpha-D-ribose 1-phosphate + guanine. It carries out the reaction inosine + phosphate = alpha-D-ribose 1-phosphate + hypoxanthine. The enzyme catalyses thymidine + phosphate = 2-deoxy-alpha-D-ribose 1-phosphate + thymine. It catalyses the reaction uridine + phosphate = alpha-D-ribose 1-phosphate + uracil. The catalysed reaction is xanthosine + phosphate = alpha-D-ribose 1-phosphate + xanthine. Functionally, catalyzes the phosphorolysis of diverse nucleosides, yielding D-ribose 1-phosphate and the respective free bases. Can use uridine, adenosine, guanosine, cytidine, thymidine, inosine and xanthosine as substrates. Also catalyzes the reverse reactions. The chain is Pyrimidine/purine nucleoside phosphorylase from Rhodopirellula baltica (strain DSM 10527 / NCIMB 13988 / SH1).